Reading from the N-terminus, the 112-residue chain is Small ribosomal subunit protein bS6 (112 aa).

This sequence belongs to the bacterial ribosomal protein bS6 family.

Functionally, binds together with bS18 to 16S ribosomal RNA. This is Small ribosomal subunit protein bS6 (rpsF) from Chlamydia muridarum (strain MoPn / Nigg).